A 2166-amino-acid polypeptide reads, in one-letter code: Protein TIC236, chloroplastic (2166 aa).

Residues 1–37 (MSLRLQNPFLSTPLLHGSFNRREKRINVARRAFRSKR) constitute a chloroplast transit peptide. The Stromal segment spans residues 38–101 (IYSEKKQNDW…RSLAPVWEEG (64 aa)). The chain crosses the membrane as a helical span at residues 102–122 (LFFLRCSVFFAVISGVCLLVW). Residues 123–2166 (YGQNKARVFV…LFEYSATSQD (2044 aa)) are Chloroplast intermembrane-facing. Positions 1611 to 1649 (MSEGEVSETDRGGAVKIPSWAKEKEDDEKRTSRDRSEER) are disordered. Residues 1631 to 1649 (AKEKEDDEKRTSRDRSEER) are compositionally biased toward basic and acidic residues.

This sequence belongs to the TamB family. As to quaternary structure, part of the TIC complex, which can interact with components of the TOC complex to form a larger import complex. Interacts with the TOC complex component TOC75-3.

The protein localises to the plastid. The protein resides in the chloroplast inner membrane. It is found in the chloroplast intermembrane space. Functionally, part of the inner chloroplast membrane translocon complex (TIC) which associates with the outer chloroplast membrane translocon complex (TOC) and forms a supercomplex involved in protein precursor import into the chloroplast stroma. Required for the import of HSP93, TIC40 and RBCS protein precursors in the chloroplast stroma. Links the outer and inner membrane translocons of the chloroplast envelope. This Arabidopsis thaliana (Mouse-ear cress) protein is Protein TIC236, chloroplastic.